A 203-amino-acid chain; its full sequence is Glycerol-3-phosphate acyltransferase (203 aa).

A run of 5 helical transmembrane segments spans residues 10 to 30 (MLIL…GLIL), 59 to 79 (GAAA…VLLA), 87 to 107 (AAQV…WLGF), 116 to 136 (FLGL…LSWL), and 160 to 180 (LVLL…LMVF).

Belongs to the PlsY family. In terms of assembly, probably interacts with PlsX.

Its subcellular location is the cell inner membrane. It catalyses the reaction an acyl phosphate + sn-glycerol 3-phosphate = a 1-acyl-sn-glycero-3-phosphate + phosphate. It participates in lipid metabolism; phospholipid metabolism. Its function is as follows. Catalyzes the transfer of an acyl group from acyl-phosphate (acyl-PO(4)) to glycerol-3-phosphate (G3P) to form lysophosphatidic acid (LPA). This enzyme utilizes acyl-phosphate as fatty acyl donor, but not acyl-CoA or acyl-ACP. In Ruegeria pomeroyi (strain ATCC 700808 / DSM 15171 / DSS-3) (Silicibacter pomeroyi), this protein is Glycerol-3-phosphate acyltransferase.